Reading from the N-terminus, the 210-residue chain is Mediator of RNA polymerase II transcription subunit 20 (210 aa).

It belongs to the Mediator complex subunit 20 family. As to quaternary structure, component of the Mediator complex, which is composed of at least 21 subunits that form three structurally distinct submodules. The Mediator head module contains MED6, MED8, MED11, SRB4/MED17, SRB5/MED18, ROX3/MED19, SRB2/MED20 and SRB6/MED22, the middle module contains MED1, MED4, NUT1/MED5, MED7, CSE2/MED9, NUT2/MED10, SRB7/MED21 and SOH1/MED31, and the tail module contains MED2, PGD1/MED3, RGR1/MED14, GAL11/MED15 and SIN4/MED16. The head and the middle modules interact directly with RNA polymerase II, whereas the elongated tail module interacts with gene-specific regulatory proteins. MED1 interacts directly with MED4 and MED7. SRB2/MED20 interacts directly with SRB4/MED17 and SRB5/MED18.

The protein localises to the nucleus. Component of the Mediator complex, a coactivator involved in the regulated transcription of nearly all RNA polymerase II-dependent genes. Mediator functions as a bridge to convey information from gene-specific regulatory proteins to the basal RNA polymerase II transcription machinery. The Mediator complex, having a compact conformation in its free form, is recruited to promoters by direct interactions with regulatory proteins and serves for the assembly of a functional preinitiation complex with RNA polymerase II and the general transcription factors. The Mediator complex unfolds to an extended conformation and partially surrounds RNA polymerase II, specifically interacting with the unphosphorylated form of the C-terminal domain (CTD) of RNA polymerase II. The Mediator complex dissociates from the RNA polymerase II holoenzyme and stays at the promoter when transcriptional elongation begins. This Saccharomyces cerevisiae (strain ATCC 204508 / S288c) (Baker's yeast) protein is Mediator of RNA polymerase II transcription subunit 20 (SRB2).